A 189-amino-acid polypeptide reads, in one-letter code: Development-specific protein LVN1.2 (189 aa).

Endoderm cells.

This Lytechinus variegatus (Green sea urchin) protein is Development-specific protein LVN1.2.